A 407-amino-acid chain; its full sequence is Indoleamine 2,3-dioxygenase 2 (407 aa).

Residue His-347 coordinates heme.

Belongs to the indoleamine 2,3-dioxygenase family. Heme is required as a cofactor. Detected in liver, small intestine, spleen, placenta, thymus, lung, brain, kidney, and colon. Also expressed at low level in testis and thyroid. Not expressed in the majority of human tumor samples (&gt;99%).

The enzyme catalyses L-tryptophan + O2 = N-formyl-L-kynurenine. Its pathway is amino-acid degradation; L-tryptophan degradation via kynurenine pathway; L-kynurenine from L-tryptophan: step 1/2. Its activity is regulated as follows. Activity is inhibited by D-1MT (1-methyl-D-tryptophan) and MTH-trp (methylthiohydantoin-DL-tryptophan) but not L-1MT (1-methyl-L-tryptophan). In terms of biological role, catalyzes the first and rate limiting step of the catabolism of the essential amino acid tryptophan along the kynurenine pathway. Involved in immune regulation. May not play a significant role in tryptophan-related tumoral resistance. This Homo sapiens (Human) protein is Indoleamine 2,3-dioxygenase 2.